We begin with the raw amino-acid sequence, 439 residues long: Orphan methyltransferase M.SPRI (439 aa).

The SAM-dependent MTase C5-type domain occupies 4–436 (LRVMSLFSGI…KELIHTYINK (433 aa)). The active site involves Cys78.

The protein belongs to the class I-like SAM-binding methyltransferase superfamily. C5-methyltransferase family. As to quaternary structure, monomer.

It catalyses the reaction a 2'-deoxycytidine in DNA + S-adenosyl-L-methionine = a 5-methyl-2'-deoxycytidine in DNA + S-adenosyl-L-homocysteine + H(+). In terms of biological role, a methyltransferase that methylates the C-1 in the sequence 5'-GGCC-3' and both cytosines in the sequence 5'-CCGG-3'. A methyltransferase that methylates C-3 within the sequence 5'-GGCC-3', C-1 in 5'-CCGG-3' and C-2 in 5'-CCWGG-3'. Modification confers resistance against restriction enzymes that recognize these sequences. This chain is Orphan methyltransferase M.SPRI, found in Bacillus phage SPR (Bacteriophage SPR).